We begin with the raw amino-acid sequence, 247 residues long: Uridylate kinase (247 aa).

Residue 15–18 coordinates ATP; that stretch reads KLSG. The interval 23 to 28 is involved in allosteric activation by GTP; that stretch reads GEEGFG. A UMP-binding site is contributed by G57. Positions 58 and 62 each coordinate ATP. Residues D77 and 138–145 each bind UMP; that span reads TGNPFFTT. T165, Y171, and D174 together coordinate ATP.

This sequence belongs to the UMP kinase family. In terms of assembly, homohexamer.

The protein localises to the cytoplasm. It catalyses the reaction UMP + ATP = UDP + ADP. Its pathway is pyrimidine metabolism; CTP biosynthesis via de novo pathway; UDP from UMP (UMPK route): step 1/1. Its activity is regulated as follows. Allosterically activated by GTP. Inhibited by UTP. Its function is as follows. Catalyzes the reversible phosphorylation of UMP to UDP. The polypeptide is Uridylate kinase (Pseudoalteromonas atlantica (strain T6c / ATCC BAA-1087)).